A 259-amino-acid chain; its full sequence is MLKELRQKRPLVHNITNYVAAQFVANGLLALGASPLMSDAIDEMRDLAKISDALAINIGTLNDRAILCAKEAIKHYKALNKPIVLDPVGCSASALRHDTSLELLKSGGISALRGNAAELGSLVGISCESKGLDSNDAATPVEIIKLAAQKYSVIAVMTGKTDYVSDGKKVLSITGGSEYLALITGAGCLHAAACASFLSLKKDPLDSMAQLCALYKQAAFNAQKKVLENNGSNGSFLFYFLDALSLPIELENSLIKEEW.

Substrate is bound at residue M37. Residues R113 and T158 each contribute to the ATP site. G185 is a binding site for substrate.

This sequence belongs to the Thz kinase family. Requires Mg(2+) as cofactor.

The catalysed reaction is 5-(2-hydroxyethyl)-4-methylthiazole + ATP = 4-methyl-5-(2-phosphooxyethyl)-thiazole + ADP + H(+). The protein operates within cofactor biosynthesis; thiamine diphosphate biosynthesis; 4-methyl-5-(2-phosphoethyl)-thiazole from 5-(2-hydroxyethyl)-4-methylthiazole: step 1/1. Functionally, catalyzes the phosphorylation of the hydroxyl group of 4-methyl-5-beta-hydroxyethylthiazole (THZ). The polypeptide is Hydroxyethylthiazole kinase (Helicobacter pylori (strain ATCC 700392 / 26695) (Campylobacter pylori)).